The following is a 270-amino-acid chain: Tetraspanin-17 (270 aa).

The Cytoplasmic portion of the chain corresponds to 1–19; that stretch reads MPGKHQHFQEPEVGCCGKY. The chain crosses the membrane as a helical span at residues 20–40; it reads FLFGFNIVFWVLGALFLAIGL. Over 41–63 the chain is Extracellular; that stretch reads WAWSEKGVLSNISALTDLGGLDP. Residue N51 is glycosylated (N-linked (GlcNAc...) asparagine). The helical transmembrane segment at 64–84 threads the bilayer; the sequence is VWLFVVVGGVMSVLGFAGCIG. Over 85 to 94 the chain is Cytoplasmic; it reads ALRENTFLLK. The helical transmembrane segment at 95–115 threads the bilayer; sequence FFSVFLGLIFFLELATGILAF. Residues 116-234 are Extracellular-facing; the sequence is VFKDWIRDQL…GQFEKWLQDN (119 aa). 4 disulfide bridges follow: C155–C223, C156–C188, C172–C182, and C189–C202. N-linked (GlcNAc...) asparagine glycosylation occurs at N171. Residues 235 to 255 form a helical membrane-spanning segment; it reads LIVVAGVFVGIALLQIFGICL. Over 256–270 the chain is Cytoplasmic; it reads AQNLVSDIKAVKANW.

This sequence belongs to the tetraspanin (TM4SF) family. In terms of assembly, interacts with ADAM10; the interaction influences ADAM10 substrate specificity, endocytosis and turnover.

Its subcellular location is the cell membrane. In terms of biological role, part of TspanC8 subgroup, composed of 6 members that interact with the transmembrane metalloprotease ADAM10. This interaction is required for ADAM10 exit from the endoplasmic reticulum and for enzymatic maturation and trafficking to the cell surface as well as substrate specificity. Different TspanC8/ADAM10 complexes have distinct substrates. Seems to regulate VE-cadherin expression in endothelial cells probably through interaction with ADAM10, promoting leukocyte transmigration. This is Tetraspanin-17 (TSPAN17) from Bos taurus (Bovine).